The sequence spans 383 residues: Processive diacylglycerol beta-glucosyltransferase (383 aa).

It belongs to the glycosyltransferase 28 family. UgtP subfamily.

The protein resides in the cell membrane. The catalysed reaction is a 1,2-diacyl-3-O-(beta-D-glucopyranosyl)-sn-glycerol + UDP-alpha-D-glucose = a 1,2-diacyl-3-O-(beta-D-Glc-(1-&gt;6)-beta-D-Glc)-sn-glycerol + UDP + H(+). It carries out the reaction a 1,2-diacyl-3-O-(beta-D-Glc-(1-&gt;6)-beta-D-Glc)-sn-glycerol + UDP-alpha-D-glucose = a 1,2-diacyl-3-O-(beta-D-Glc-(1-&gt;6)-beta-D-Glc-(1-&gt;6)-beta-D-Glc)-sn-glycerol + UDP + H(+). It catalyses the reaction a 1,2-diacyl-sn-glycerol + UDP-alpha-D-glucose = a 1,2-diacyl-3-O-(beta-D-glucopyranosyl)-sn-glycerol + UDP + H(+). It participates in glycolipid metabolism; diglucosyl-diacylglycerol biosynthesis. Functionally, processive glucosyltransferase involved in the biosynthesis of both the bilayer- and non-bilayer-forming membrane glucolipids. Is able to successively transfer up to three glucosyl residues to diacylglycerol (DAG), thereby catalyzing the formation of beta-monoglucosyl-DAG (3-O-(beta-D-glucopyranosyl)-1,2-diacyl-sn-glycerol), beta-diglucosyl-DAG (3-O-(beta-D-glucopyranosyl-beta-(1-&gt;6)-D-glucopyranosyl)-1,2-diacyl-sn-glycerol) and beta-triglucosyl-DAG (3-O-(beta-D-glucopyranosyl-beta-(1-&gt;6)-D-glucopyranosyl-beta-(1-&gt;6)-D-glucopyranosyl)-1,2-diacyl-sn-glycerol). Beta-diglucosyl-DAG is the predominant glycolipid found in Bacillales and is also used as a membrane anchor for lipoteichoic acid (LTA). The protein is Processive diacylglycerol beta-glucosyltransferase of Bacillus pumilus (strain SAFR-032).